Here is a 267-residue protein sequence, read N- to C-terminus: 2-oxoglutarate synthase subunit KorB (267 aa).

As to quaternary structure, heterotetramer of the KorA, KorB, KorC and KorD subunits.

It carries out the reaction 2 oxidized [2Fe-2S]-[ferredoxin] + 2-oxoglutarate + CoA = succinyl-CoA + 2 reduced [2Fe-2S]-[ferredoxin] + CO2 + H(+). The polypeptide is 2-oxoglutarate synthase subunit KorB (korB) (Archaeoglobus fulgidus (strain ATCC 49558 / DSM 4304 / JCM 9628 / NBRC 100126 / VC-16)).